Here is a 200-residue protein sequence, read N- to C-terminus: Dephospho-CoA kinase (200 aa).

In terms of domain architecture, DPCK spans Val-3–Arg-200. ATP is bound at residue Gly-11 to Thr-16.

The protein belongs to the CoaE family.

The protein resides in the cytoplasm. The catalysed reaction is 3'-dephospho-CoA + ATP = ADP + CoA + H(+). It functions in the pathway cofactor biosynthesis; coenzyme A biosynthesis; CoA from (R)-pantothenate: step 5/5. Its function is as follows. Catalyzes the phosphorylation of the 3'-hydroxyl group of dephosphocoenzyme A to form coenzyme A. This is Dephospho-CoA kinase from Brucella melitensis biotype 1 (strain ATCC 23456 / CCUG 17765 / NCTC 10094 / 16M).